Reading from the N-terminus, the 384-residue chain is Chaperone protein DnaJ (384 aa).

One can recognise a J domain in the interval 6-71 (DYYEVLGISK…TKRKTYDQFG (66 aa)). The CR-type zinc finger occupies 141-223 (GKKMSIKVNR…CHGTGNTRKV (83 aa)). 8 residues coordinate Zn(2+): Cys154, Cys157, Cys171, Cys174, Cys197, Cys200, Cys211, and Cys214. 4 CXXCXGXG motif repeats span residues 154 to 161 (CEECNGTG), 171 to 178 (CSTCNGTG), 197 to 204 (CSACNGTG), and 211 to 218 (CSKCHGTG).

Belongs to the DnaJ family. As to quaternary structure, homodimer. The cofactor is Zn(2+).

It localises to the cytoplasm. Its function is as follows. Participates actively in the response to hyperosmotic and heat shock by preventing the aggregation of stress-denatured proteins and by disaggregating proteins, also in an autonomous, DnaK-independent fashion. Unfolded proteins bind initially to DnaJ; upon interaction with the DnaJ-bound protein, DnaK hydrolyzes its bound ATP, resulting in the formation of a stable complex. GrpE releases ADP from DnaK; ATP binding to DnaK triggers the release of the substrate protein, thus completing the reaction cycle. Several rounds of ATP-dependent interactions between DnaJ, DnaK and GrpE are required for fully efficient folding. Also involved, together with DnaK and GrpE, in the DNA replication of plasmids through activation of initiation proteins. In Clostridioides difficile (strain 630) (Peptoclostridium difficile), this protein is Chaperone protein DnaJ.